Here is a 780-residue protein sequence, read N- to C-terminus: Heat shock protein 90-5, chloroplastic (780 aa).

The N-terminal 60 residues, 1–60, are a transit peptide targeting the chloroplast; that stretch reads MAPALSRSLYTSPLTSVPITPVSSRLSHLRSSFLPHGGALRTGVSCSWNLEKRCNRFAVK. ATP-binding positions include Glu-106, Asn-110, Asp-152, Met-157, 172–173, 196–201, Thr-251, and Arg-441; these read SG and QFGVGF. Positions 742–780 are disordered; it reads GRVEEEEESSTVNEGDDKSGETEVVEPSEVRAESDPWQD. Positions 769–780 are enriched in basic and acidic residues; sequence SEVRAESDPWQD.

This sequence belongs to the heat shock protein 90 family. In terms of assembly, homodimer. Interacts with VIPP1. Interacts with P23-1. Expressed in roots, cotyledons, young leaves, mature leaves, stems, flowers, petals and siliques.

It is found in the plastid. The protein localises to the chloroplast stroma. Functionally, molecular chaperone required for chloroplast biogenesis. Essential for chloroplast biogenesis and maintenance, and thus for embryogenesis. May be involved in the disassembly of VIPP1 for thylakoid membrane formation and/or maintenance. Cooperates with TIC components and other molecular chaperones to drive transport of preproteins into chloroplasts and functions in the chloroplast stroma to facilitate membrane translocation during protein import into the organelle. This is Heat shock protein 90-5, chloroplastic from Arabidopsis thaliana (Mouse-ear cress).